We begin with the raw amino-acid sequence, 129 residues long: Ergosterol biosynthetic protein 28 (129 aa).

The next 4 helical transmembrane spans lie at 4–24 (LGYW…FGFF), 46–66 (TFGV…FNLE), 71–91 (YLAT…EYLF), and 96–116 (TIAN…WMLL).

The protein belongs to the ERG28 family.

The protein localises to the endoplasmic reticulum membrane. This is Ergosterol biosynthetic protein 28 from Arabidopsis thaliana (Mouse-ear cress).